Consider the following 191-residue polypeptide: Protein GrpE (191 aa).

It belongs to the GrpE family. In terms of assembly, homodimer.

Its subcellular location is the cytoplasm. Its function is as follows. Participates actively in the response to hyperosmotic and heat shock by preventing the aggregation of stress-denatured proteins, in association with DnaK and GrpE. It is the nucleotide exchange factor for DnaK and may function as a thermosensor. Unfolded proteins bind initially to DnaJ; upon interaction with the DnaJ-bound protein, DnaK hydrolyzes its bound ATP, resulting in the formation of a stable complex. GrpE releases ADP from DnaK; ATP binding to DnaK triggers the release of the substrate protein, thus completing the reaction cycle. Several rounds of ATP-dependent interactions between DnaJ, DnaK and GrpE are required for fully efficient folding. The protein is Protein GrpE of Helicobacter pylori (strain P12).